An 803-amino-acid polypeptide reads, in one-letter code: Translation initiation factor IF-2 (803 aa).

2 disordered regions span residues 95 to 125 and 138 to 178; these read PVVE…EKAE and EVKE…EREE. The segment covering 111 to 121 has biased composition (polar residues); that stretch reads VPLTSDTTNLN. The span at 138 to 155 shows a compositional bias: basic and acidic residues; the sequence is EVKEEAKKTPSEKKETPK. Positions 156 to 167 are enriched in basic residues; sequence KGPRKETRRSRK. Over residues 168 to 178 the composition is skewed to basic and acidic residues; that stretch reads PDKEDKWEREE. Residues 302–471 enclose the tr-type G domain; sequence PRAPVVTIMG…LLQAEVLELK (170 aa). Positions 311 to 318 are G1; that stretch reads GHVDHGKT. 311 to 318 is a GTP binding site; the sequence is GHVDHGKT. Residues 336-340 are G2; it reads GITQH. The G3 stretch occupies residues 357–360; it reads DTPG. Residues 357–361 and 411–414 each bind GTP; these read DTPGH and NKID. Positions 411 to 414 are G4; sequence NKID. A G5 region spans residues 447 to 449; the sequence is SAK.

The protein belongs to the TRAFAC class translation factor GTPase superfamily. Classic translation factor GTPase family. IF-2 subfamily.

Its subcellular location is the cytoplasm. Its function is as follows. One of the essential components for the initiation of protein synthesis. Protects formylmethionyl-tRNA from spontaneous hydrolysis and promotes its binding to the 30S ribosomal subunits. Also involved in the hydrolysis of GTP during the formation of the 70S ribosomal complex. The chain is Translation initiation factor IF-2 from Coxiella burnetii (strain RSA 331 / Henzerling II).